A 428-amino-acid polypeptide reads, in one-letter code: Adenylosuccinate synthetase (428 aa).

GTP-binding positions include 12–18 (GDEGKGK) and 40–42 (GHT). The Proton acceptor role is filled by aspartate 13. Mg(2+) contacts are provided by aspartate 13 and glycine 40. Residues 13–16 (DEGK), 38–41 (NAGH), threonine 130, arginine 144, glutamine 225, threonine 240, and arginine 304 each bind IMP. The active-site Proton donor is histidine 41. 300 to 306 (VTTGRSR) is a binding site for substrate. GTP is bound by residues arginine 306, 332–334 (KID), and 414–416 (GVG).

This sequence belongs to the adenylosuccinate synthetase family. As to quaternary structure, homodimer. It depends on Mg(2+) as a cofactor.

Its subcellular location is the cytoplasm. It carries out the reaction IMP + L-aspartate + GTP = N(6)-(1,2-dicarboxyethyl)-AMP + GDP + phosphate + 2 H(+). The protein operates within purine metabolism; AMP biosynthesis via de novo pathway; AMP from IMP: step 1/2. In terms of biological role, plays an important role in the de novo pathway of purine nucleotide biosynthesis. Catalyzes the first committed step in the biosynthesis of AMP from IMP. In Clostridium botulinum (strain Alaska E43 / Type E3), this protein is Adenylosuccinate synthetase.